The chain runs to 61 residues: MARKAMIEKWKKTPKYSTRAYTRCRICGRPHSVLKKYGICRICFRELAYRGQIPGCKKASW.

Residues C24, C27, C40, and C43 each contribute to the Zn(2+) site.

Belongs to the universal ribosomal protein uS14 family. Zinc-binding uS14 subfamily. In terms of assembly, part of the 30S ribosomal subunit. Contacts proteins S3 and S10. Requires Zn(2+) as cofactor.

In terms of biological role, binds 16S rRNA, required for the assembly of 30S particles and may also be responsible for determining the conformation of the 16S rRNA at the A site. The polypeptide is Small ribosomal subunit protein uS14 (Clostridium novyi (strain NT)).